A 291-amino-acid chain; its full sequence is ATP synthase gamma chain (291 aa).

Belongs to the ATPase gamma chain family. In terms of assembly, F-type ATPases have 2 components, CF(1) - the catalytic core - and CF(0) - the membrane proton channel. CF(1) has five subunits: alpha(3), beta(3), gamma(1), delta(1), epsilon(1). CF(0) has three main subunits: a, b and c.

It is found in the cell membrane. Functionally, produces ATP from ADP in the presence of a proton gradient across the membrane. The gamma chain is believed to be important in regulating ATPase activity and the flow of protons through the CF(0) complex. In Streptococcus pyogenes serotype M3 (strain ATCC BAA-595 / MGAS315), this protein is ATP synthase gamma chain.